A 445-amino-acid chain; its full sequence is RING finger and transmembrane domain-containing protein 2 (445 aa).

Topologically, residues 1–183 (MWLLAAHQVL…LLAKLCFQHK (183 aa)) are extracellular. The disordered stretch occupies residues 12-41 (KMQRRHSSNTDNIPPERSRSQALSPEASVD). The helical transmembrane segment at 184 to 203 (LGIAVCIGMASTFAYANSTL) threads the bilayer. The Cytoplasmic segment spans residues 204 to 215 (REQVSLKEKRSV). Residues 216-236 (LVILWILAFLAGNTMYVLYTF) form a helical membrane-spanning segment. The Extracellular segment spans residues 237–256 (SSQQLYSSLIFLKPNLETLD). Residues 257-277 (FFDLLWIVGIADFVLKYITIA) form a helical membrane-spanning segment. Over 278 to 330 (LKCLIVALPKIILAVKSKGKFYLVIEELSQLFRSLVPIQLWYKYIMGDDSSNS) the chain is Cytoplasmic. The chain crosses the membrane as a helical span at residues 331–351 (YFLGGVLIVLYSLCKSFDICG). Over 352 to 445 (RVGGLRKALK…GATSAHLQVY (94 aa)) the chain is Extracellular. The RING-type zinc finger occupies 385–423 (CAICQAEFRDPMILLCQHVFCEECLCLWLDRERTCPLCR).

The protein resides in the membrane. Its function is as follows. E3 ubiquitin-protein ligase that negatively regulates IL3-dependent cellular responses through IL3RA ubiquitination and degradation by the proteasome, having an anti-inflammatory effect. The polypeptide is RING finger and transmembrane domain-containing protein 2 (Rnft2) (Mus musculus (Mouse)).